The chain runs to 206 residues: Protein GrpE (206 aa).

Belongs to the GrpE family. Homodimer.

Its subcellular location is the cytoplasm. In terms of biological role, participates actively in the response to hyperosmotic and heat shock by preventing the aggregation of stress-denatured proteins, in association with DnaK and GrpE. It is the nucleotide exchange factor for DnaK and may function as a thermosensor. Unfolded proteins bind initially to DnaJ; upon interaction with the DnaJ-bound protein, DnaK hydrolyzes its bound ATP, resulting in the formation of a stable complex. GrpE releases ADP from DnaK; ATP binding to DnaK triggers the release of the substrate protein, thus completing the reaction cycle. Several rounds of ATP-dependent interactions between DnaJ, DnaK and GrpE are required for fully efficient folding. The protein is Protein GrpE of Psychromonas ingrahamii (strain DSM 17664 / CCUG 51855 / 37).